Here is a 337-residue protein sequence, read N- to C-terminus: Probable cytosolic iron-sulfur protein assembly protein 1 (337 aa).

WD repeat units follow at residues L11–L50, V57–G96, G109–E148, E155–A194, G199–Q240, A252–S290, and A301–D337.

It belongs to the WD repeat CIA1 family. In terms of assembly, interacts with NAR1.

It localises to the cytoplasm. The protein resides in the nucleus. In terms of biological role, essential component of the cytosolic iron-sulfur (Fe/S) protein assembly machinery. Required for the maturation of extramitochondrial Fe/S proteins. The sequence is that of Probable cytosolic iron-sulfur protein assembly protein 1 from Candida glabrata (strain ATCC 2001 / BCRC 20586 / JCM 3761 / NBRC 0622 / NRRL Y-65 / CBS 138) (Yeast).